We begin with the raw amino-acid sequence, 120 residues long: Glutamate--tRNA ligase (120 aa).

This sequence belongs to the class-I aminoacyl-tRNA synthetase family. Glutamate--tRNA ligase type 1 subfamily. In terms of assembly, monomer.

It localises to the cytoplasm. It carries out the reaction tRNA(Glu) + L-glutamate + ATP = L-glutamyl-tRNA(Glu) + AMP + diphosphate. Catalyzes the attachment of glutamate to tRNA(Glu) in a two-step reaction: glutamate is first activated by ATP to form Glu-AMP and then transferred to the acceptor end of tRNA(Glu). The sequence is that of Glutamate--tRNA ligase (gltX) from Staphylococcus xylosus.